A 77-amino-acid polypeptide reads, in one-letter code: Small ribosomal subunit protein uS17 (77 aa).

It belongs to the universal ribosomal protein uS17 family. Part of the 30S ribosomal subunit.

Its function is as follows. One of the primary rRNA binding proteins, it binds specifically to the 5'-end of 16S ribosomal RNA. The chain is Small ribosomal subunit protein uS17 from Rickettsia conorii (strain ATCC VR-613 / Malish 7).